A 633-amino-acid polypeptide reads, in one-letter code: Extracellular metalloproteinase 3 (633 aa).

A signal peptide spans 1 to 18 (MHGLLLAGLLALPMNVLA). Residues 19–246 (HPAEQHASNV…VHNVVDYVAS (228 aa)) constitute a propeptide that is removed on maturation. N-linked (GlcNAc...) asparagine glycosylation is present at Asn410. Position 429 (His429) interacts with Zn(2+). Glu430 is an active-site residue. Zn(2+) is bound at residue His433. Asn480 and Asn622 each carry an N-linked (GlcNAc...) asparagine glycan.

This sequence belongs to the peptidase M36 family. Zn(2+) is required as a cofactor.

The protein localises to the secreted. In terms of biological role, secreted metalloproteinase probably acting as a virulence factor. This chain is Extracellular metalloproteinase 3 (MEP3), found in Trichophyton tonsurans (Scalp ringworm fungus).